A 244-amino-acid chain; its full sequence is Small ribosomal subunit protein eS4 (244 aa).

In terms of domain architecture, S4 RNA-binding spans 43-106; that stretch reads LPLLLVVRDI…DENYLVLFDE (64 aa).

The protein belongs to the eukaryotic ribosomal protein eS4 family.

This is Small ribosomal subunit protein eS4 from Methanococcus maripaludis (strain C6 / ATCC BAA-1332).